Reading from the N-terminus, the 118-residue chain is Ribonuclease P protein component (118 aa).

The protein belongs to the RnpA family. As to quaternary structure, consists of a catalytic RNA component (M1 or rnpB) and a protein subunit.

The enzyme catalyses Endonucleolytic cleavage of RNA, removing 5'-extranucleotides from tRNA precursor.. In terms of biological role, RNaseP catalyzes the removal of the 5'-leader sequence from pre-tRNA to produce the mature 5'-terminus. It can also cleave other RNA substrates such as 4.5S RNA. The protein component plays an auxiliary but essential role in vivo by binding to the 5'-leader sequence and broadening the substrate specificity of the ribozyme. This is Ribonuclease P protein component from Vibrio campbellii (strain ATCC BAA-1116).